An 873-amino-acid polypeptide reads, in one-letter code: Aminopeptidase M1-D (873 aa).

The segment at 96–203 (LGEGVLAMRF…MSTYLVAIVV (108 aa)) is required for membrane association. Substrate-binding positions include glutamate 136 and 269 to 273 (GAMEN). Histidine 305 contributes to the Zn(2+) binding site. The active-site Proton acceptor is the glutamate 306. Zn(2+) is bound by residues histidine 309 and glutamate 328. The short motif at 721-722 (LL) is the Dileucine internalization motif element.

It belongs to the peptidase M1 family. In terms of assembly, homodimer. Zn(2+) is required as a cofactor.

It is found in the membrane. Its subcellular location is the microsome membrane. The protein resides in the cytoplasm. The enzyme catalyses Release of an N-terminal amino acid, Xaa-|-Yaa- from a peptide, amide or arylamide. Xaa is preferably Ala, but may be most amino acids including Pro (slow action). When a terminal hydrophobic residue is followed by a prolyl residue, the two may be released as an intact Xaa-Pro dipeptide.. The chain is Aminopeptidase M1-D from Oryza sativa subsp. japonica (Rice).